We begin with the raw amino-acid sequence, 1410 residues long: MGGQLSLLAQTAPSIGIFSYIDILDETHYVSQLNNSRFLKTCKALDPNGEIVVKVFIKPKEDSSLEKIIQRLKREAVLLSALPNVLNYSKIFESTRCGYLVRQHLKTNLYDRLSTRPYFTEIETKFVVFQLLQALKDIHDLDVIHGDIKTENLLLTSWDWVVLSDFCSNIKPAYIPDDNPGEFSFYFDTSKRRACYLAPEKFDSAKASGDGVHQATKEMDIFSLGCCIAELYLDGAALFNLSQLFKYKSGDYTLNDILPQTISKSSPVLKDILQDMLQVDPKKRLSAHELLEKYRTIYFPDTFYDFLYDYCKTLVTLGTSVPCADQIEVNTTLQDHLGSIDEILIKIYCDFGRICKSLKLPVLDQEDMNYNTKDSFLRVSDKLLRLENYETDKITASIQNEVSLIILVFLCKEFRNLQFPENKVKALQLILAFSLFVLDDTKLDRTLPYLVAALEDDSTRVKVMAMNCVTTLIKEVKHPNQLNENIFVDYLLPRVQALLQNGQEESLVRVAIASNLSDLALKANLFQEYCHTMQSSTIPNIVHDFESIEVIRKYSRKLQQLFEDLTVSILTDPEISVKVALLKNILPLCKYFGREKTNDVILSHLITYLNDRDPALRMYLVECISGIAILLGPITMEQYILPLIIQTITDEEELVVVSVLKNLKDLLKTRFVNKKYFYDITKFLSPLILHPNSWIRNFVLTTLVECINQMSKAEVYCVLYPVLRPFFDFDVDFTGDMLISCAKLPVSRNTYNLLRSWNNRSKKTFFWQRVTTNYVDAFGNSTINFVDKRYVKENYGLKTMKVESNIHLHTNENENIPLTLEDKFWIDKFKNSGLTDNELWKIVALREYVVRSSRSSSKKPETVTSIVSKLSLTPSNFSIENVMPNTVFFDIEFLHPETLTFNDLDVTNTNSIKESESNTFTDNHSKVIEMKGSLIFKTPRIPTTLSNLKNIYVQLEPTNNHSEGHAHLSARNQPANFIVKSSYEGQDKIIEKYLKQLNILPSLKEYKEFGFVSENTTAEADVINLHGKFVRSYPQIFDGTLLQSEVLLGTKSFMIYGSDQGALTVWDIDRLANEKSITRPLYYECSAEITCIKGLSGYDSFCVGLKSSEILIFRISLSKNGKAKNLQELICIRSLNLIGENSSEYPIQIECCPNNDQFQLVVLSNYSNVYLFDIRTMKVIEKLELNADYGCTISMVLDDKNNLLFFGTVSGIIEMWDARYFVQIRAWTFGESLPINKLAIMEQENKSLLVVCGGVDSAFFTLWNIEKLSCKHVFVRSNEQPSLDSFNVIDADKLDKLAFEKNNSNIKPIVQIFNNKVLYMDDIGRLLHILDTRNPEKSSTFAGSKVELHSFSVLQVTASLTMSLQKHNYQKEVNNSNYTSSRVMTVNVFQLKNKPYMLLTDEEGYINIYT.

A Protein kinase domain is found at 27-299; it reads THYVSQLNNS…LLEKYRTIYF (273 aa). Residues 33 to 41 and Lys54 each bind ATP; that span reads LNNSRFLKT. Asp147 serves as the catalytic Proton acceptor. HEAT repeat units lie at residues 441–478, 485–525, 556–594, 596–633, and 635–672; these read TKLDRTLPYLVAALEDDSTRVKVMAMNCVTTLIKEVKH, NIFV…KANL, RKLQQLFEDLTVSILTDPEISVKVALLKNILPLCKYFGR, KTNDVILSHLITYLNDRDPALRMYLVECISGIAILLGP, and TMEQYILPLIIQTITDEEELVVVSVLKNLKDLLKTRFV. 3 WD repeats span residues 1037–1076, 1187–1226, and 1230–1273; these read FDGTLLQSEVLLGTKSFMIYGSDQGALTVWDIDRLANEKS, ADYGCTISMVLDDKNNLLFFGTVSGIIEMWDARYFVQIRA, and GESL…CKHV.

The protein belongs to the protein kinase superfamily. Ser/Thr protein kinase family. As to quaternary structure, component of the autophagy-specific VPS34 PI3-kinase complex I composed of VPS15, VPS30, VPS34, ATG14 and ATG38; and of the VPS34 PI3-kinase complex II composed of VPS15, VPS30, VPS34 and VPS38. Post-translationally, autophosphorylated.

It localises to the golgi apparatus. It is found in the trans-Golgi network membrane. The protein localises to the endosome membrane. The enzyme catalyses L-seryl-[protein] + ATP = O-phospho-L-seryl-[protein] + ADP + H(+). It carries out the reaction L-threonyl-[protein] + ATP = O-phospho-L-threonyl-[protein] + ADP + H(+). Functionally, serine/threonine-protein kinase that plays a role in signaling in modulation of host immune response, intracellular survival and virulence. Required for impediment of phagosomal maturation in THP-1 macrophages. Regulatory subunit of the autophagy-specific VPS34 PI3-kinase complex I essential to recruit the ATG8-phosphatidylinositol conjugate and the ATG12-ATG5 conjugate to the pre-autophagosomal structure. Within the PS34 PI3-kinase complex I, VPS15-mediated phosphorylation of VPS34 may be required for recruiting VPS34 to the membrane but not for activation of its PI3K activity. Is also involved in endosome-to-Golgi retrograde transport as part of the VPS34 PI3-kinase complex II. This second complex is required for the endosome-to-Golgi retrieval of PEP1 and KEX2, and the recruitment of VPS5 and VPS7, two components of the retromer complex, to endosomal membranes (probably through the synthesis of a specific pool of phosphatidylinositol 3-phosphate recruiting the retromer to the endosomes). By regulating VPS34 kinase activity, VPS15 appears to be essential for the efficient delivery of soluble hydrolases to the yeast vacuole. In Candida glabrata (strain ATCC 2001 / BCRC 20586 / JCM 3761 / NBRC 0622 / NRRL Y-65 / CBS 138) (Yeast), this protein is non-specific serine/threonine protein kinase.